The following is a 341-amino-acid chain: Phenylalanine--tRNA ligase alpha subunit (341 aa).

Position 254 (E254) interacts with Mg(2+).

The protein belongs to the class-II aminoacyl-tRNA synthetase family. Phe-tRNA synthetase alpha subunit type 1 subfamily. Tetramer of two alpha and two beta subunits. The cofactor is Mg(2+).

Its subcellular location is the cytoplasm. It catalyses the reaction tRNA(Phe) + L-phenylalanine + ATP = L-phenylalanyl-tRNA(Phe) + AMP + diphosphate + H(+). This chain is Phenylalanine--tRNA ligase alpha subunit, found in Chlorobaculum tepidum (strain ATCC 49652 / DSM 12025 / NBRC 103806 / TLS) (Chlorobium tepidum).